The sequence spans 1024 residues: Beta-galactosidase (1024 aa).

Substrate-binding residues include Asn103 and Asp202. Residue Asp202 participates in Na(+) binding. Glu417, His419, and Glu462 together coordinate Mg(2+). Substrate is bound by residues Glu462 and 538–541; that span reads EYAH. The Proton donor role is filled by Glu462. The Nucleophile role is filled by Glu538. A Mg(2+)-binding site is contributed by Asn598. Na(+)-binding residues include Phe602 and Asn605. Substrate-binding residues include Asn605 and Trp1000.

It belongs to the glycosyl hydrolase 2 family. Homotetramer. The cofactor is Mg(2+). Requires Na(+) as cofactor.

The catalysed reaction is Hydrolysis of terminal non-reducing beta-D-galactose residues in beta-D-galactosides.. In Escherichia coli O139:H28 (strain E24377A / ETEC), this protein is Beta-galactosidase.